We begin with the raw amino-acid sequence, 203 residues long: Chaperonin-like RbcX protein 2, chloroplastic (203 aa).

Residues 1–78 (MVSAWFVVGS…RKSKKLLIVN (78 aa)) constitute a chloroplast transit peptide.

Belongs to the RbcX family. In terms of assembly, homodimer. Interacts with rbcL, atpB and RBCS-1B.

The protein resides in the plastid. It localises to the chloroplast stroma. Chaperone involved in RuBisCO assembly process. The chain is Chaperonin-like RbcX protein 2, chloroplastic from Arabidopsis thaliana (Mouse-ear cress).